The chain runs to 311 residues: Interleukin-20 receptor subunit beta (311 aa).

A signal peptide spans 1 to 29 (MQTFTMVLEEIWTSLFMWFFYALIPCLLT). Over 30–233 (DEVAILPAPQ…VEVQGEAIPL (204 aa)) the chain is Extracellular. Fibronectin type-III domains follow at residues 37-136 (APQN…RNST) and 144-228 (EITK…EVQG). Asparagine 40 carries an N-linked (GlcNAc...) asparagine glycan. Residues cysteine 89 and cysteine 97 are joined by a disulfide bond. Residue asparagine 134 is glycosylated (N-linked (GlcNAc...) asparagine). Cysteine 202 and cysteine 223 form a disulfide bridge. A helical transmembrane segment spans residues 234-254 (VLALFAFVGFMLILVVVPLFV). Residues 255 to 311 (WKMGRLLQYSCCPVVVLPDTLKITNSPQKLISCRREEVDACATAVMSPEELLRAWIS) lie on the Cytoplasmic side of the membrane.

The protein belongs to the type II cytokine receptor family. In terms of assembly, heterodimer with IL20RA and heterodimer with IL22RA1. As to expression, widely expressed with highest levels in skin and testis. Highly expressed in psoriatic skin.

It is found in the membrane. Its function is as follows. The IL20RA/IL20RB dimer is a receptor for IL19, IL20 and IL24. The IL22RA1/IL20RB dimer is a receptor for IL20 and IL24. The chain is Interleukin-20 receptor subunit beta (IL20RB) from Homo sapiens (Human).